The primary structure comprises 279 residues: Fructose-1,6-bisphosphatase class 1 (279 aa).

Residues glutamate 65, aspartate 85, leucine 87, and aspartate 88 each coordinate Mg(2+). Residues 88 to 91 (DGSS), tyrosine 190, and lysine 221 contribute to the substrate site. Glutamate 227 contributes to the Mg(2+) binding site.

The protein belongs to the FBPase class 1 family. Homotetramer. It depends on Mg(2+) as a cofactor.

Its subcellular location is the cytoplasm. It catalyses the reaction beta-D-fructose 1,6-bisphosphate + H2O = beta-D-fructose 6-phosphate + phosphate. The protein operates within carbohydrate biosynthesis; gluconeogenesis. The chain is Fructose-1,6-bisphosphatase class 1 from Helicobacter hepaticus (strain ATCC 51449 / 3B1).